A 715-amino-acid chain; its full sequence is DNA ligase (715 aa).

Residues 47 to 51 (DADYD), 96 to 97 (SL), and glutamate 129 contribute to the NAD(+) site. Lysine 131 functions as the N6-AMP-lysine intermediate in the catalytic mechanism. NAD(+) is bound by residues arginine 152, glutamate 189, lysine 306, and lysine 330. Cysteine 435, cysteine 438, cysteine 453, and cysteine 459 together coordinate Zn(2+). Positions 637–715 (KRDSAVAGKT…EDEWLALIQG (79 aa)) constitute a BRCT domain.

Belongs to the NAD-dependent DNA ligase family. LigA subfamily. It depends on Mg(2+) as a cofactor. The cofactor is Mn(2+).

It catalyses the reaction NAD(+) + (deoxyribonucleotide)n-3'-hydroxyl + 5'-phospho-(deoxyribonucleotide)m = (deoxyribonucleotide)n+m + AMP + beta-nicotinamide D-nucleotide.. DNA ligase that catalyzes the formation of phosphodiester linkages between 5'-phosphoryl and 3'-hydroxyl groups in double-stranded DNA using NAD as a coenzyme and as the energy source for the reaction. It is essential for DNA replication and repair of damaged DNA. The protein is DNA ligase of Rhodopseudomonas palustris (strain BisA53).